Here is a 124-residue protein sequence, read N- to C-terminus: uncharacterized protein (124 aa).

A dksA C4-type; degenerate zinc finger spans residues 73–94 (CEETGAPIPLAKLAVLPTARTA).

This is an uncharacterized protein from Bacillus subtilis (strain 168).